Reading from the N-terminus, the 354-residue chain is 2-methylisoborneol synthase (354 aa).

The disordered stretch occupies residues 1–29 (MIELIGHETPVPSQQQHTGGVRGTSACTP). Residues Asp113, Asp114, Glu118, Asn264, Ser268, and Glu272 each coordinate Mg(2+).

It belongs to the terpene synthase family. 2-methylisoborneol synthase subfamily. Mg(2+) is required as a cofactor.

The catalysed reaction is (E)-2-methylgeranyl diphosphate + H2O = 2-methylisoborneol + diphosphate. In terms of biological role, catalyzes the cyclization of 2-methylgeranyl diphosphate (2-MeGPP) to 2-methylisoborneol (2-MIB), which likely involves the intermediacy of 2-methyllinalyl diphosphate. This chain is 2-methylisoborneol synthase, found in Saccharopolyspora erythraea (strain ATCC 11635 / DSM 40517 / JCM 4748 / NBRC 13426 / NCIMB 8594 / NRRL 2338).